Reading from the N-terminus, the 49-residue chain is U-theraphotoxin-Lk2a (49 aa).

Intrachain disulfides connect Cys4–Cys17, Cys8–Cys41, Cys22–Cys24, and Cys35–Cys46.

It belongs to the neurotoxin 12 (Hwtx-2) family. 04 (lasiotoxin) subfamily. In terms of tissue distribution, expressed by the venom gland.

It is found in the secreted. Toxin that causes irreversible contractile paralysis into adult Aedes aegypti resulting in 100% mortality after 24 hours. The polypeptide is U-theraphotoxin-Lk2a (Lasiodora klugi (Bahia scarlet tarantula)).